The primary structure comprises 194 residues: Peptidyl-tRNA hydrolase (194 aa).

A tRNA-binding site is contributed by Tyr21. The active-site Proton acceptor is the His26. Tyr72, Asn74, and Asn120 together coordinate tRNA.

It belongs to the PTH family. As to quaternary structure, monomer.

It is found in the cytoplasm. The catalysed reaction is an N-acyl-L-alpha-aminoacyl-tRNA + H2O = an N-acyl-L-amino acid + a tRNA + H(+). Its function is as follows. Hydrolyzes ribosome-free peptidyl-tRNAs (with 1 or more amino acids incorporated), which drop off the ribosome during protein synthesis, or as a result of ribosome stalling. Functionally, catalyzes the release of premature peptidyl moieties from peptidyl-tRNA molecules trapped in stalled 50S ribosomal subunits, and thus maintains levels of free tRNAs and 50S ribosomes. The protein is Peptidyl-tRNA hydrolase of Halorhodospira halophila (strain DSM 244 / SL1) (Ectothiorhodospira halophila (strain DSM 244 / SL1)).